Reading from the N-terminus, the 89-residue chain is Small ribosomal subunit protein bS20 (89 aa).

The interval 1 to 27 is disordered; the sequence is MANIKSAKKDSIISEERRKKNASQRSK. The segment covering 7–18 has biased composition (basic and acidic residues); sequence AKKDSIISEERR.

This sequence belongs to the bacterial ribosomal protein bS20 family.

Functionally, binds directly to 16S ribosomal RNA. In Buchnera aphidicola subsp. Schizaphis graminum (strain Sg), this protein is Small ribosomal subunit protein bS20.